We begin with the raw amino-acid sequence, 124 residues long: MPEPAKSAPKKGSKKAVTKTAGKGGKKRKRSRKESYAIYVYKVLKQVHPDTGISSKAMGIMNSFVNDIFERIAGESSRLAHYNKRSTITSREIQTAVRLLLPGELAKHAVSEGTKAVTKYTSSK.

The tract at residues 1–33 (MPEPAKSAPKKGSKKAVTKTAGKGGKKRKRSRK) is disordered. Lys-6 and Lys-11 each carry N6-acetyllysine. Over residues 8–17 (APKKGSKKAV) the composition is skewed to basic residues. Ser-13 carries the phosphoserine modification. 2 positions are modified to N6-acetyllysine: Lys-14 and Lys-19. Ser-111 carries O-linked (GlcNAc) serine glycosylation. A Glycyl lysine isopeptide (Lys-Gly) (interchain with G-Cter in ubiquitin) cross-link involves residue Lys-119.

The protein belongs to the histone H2B family. In terms of assembly, the nucleosome is a histone octamer containing two molecules each of H2A, H2B, H3 and H4 assembled in one H3-H4 heterotetramer and two H2A-H2B heterodimers. The octamer wraps approximately 147 bp of DNA. Post-translationally, monoubiquitination of Lys-119 by BRE1 gives a specific tag for epigenetic transcriptional activation and is also prerequisite for histone H3 'Lys-4' and 'Lys-79' methylation. In terms of processing, phosphorylated during apoptosis; which facilitates apoptotic chromatin condensation. GlcNAcylation at Ser-111 promotes monoubiquitination of Lys-119. It fluctuates in response to extracellular glucose, and associates with transcribed genes.

Its subcellular location is the nucleus. It localises to the chromosome. Core component of nucleosome. Nucleosomes wrap and compact DNA into chromatin, limiting DNA accessibility to the cellular machineries which require DNA as a template. Histones thereby play a central role in transcription regulation, DNA repair, DNA replication and chromosomal stability. DNA accessibility is regulated via a complex set of post-translational modifications of histones, also called histone code, and nucleosome remodeling. This Oncorhynchus mykiss (Rainbow trout) protein is Histone H2B.